A 242-amino-acid polypeptide reads, in one-letter code: tRNA pseudouridine synthase A (242 aa).

Asp-51 acts as the Nucleophile in catalysis. Residue Tyr-107 coordinates substrate.

It belongs to the tRNA pseudouridine synthase TruA family. As to quaternary structure, homodimer.

It carries out the reaction uridine(38/39/40) in tRNA = pseudouridine(38/39/40) in tRNA. Formation of pseudouridine at positions 38, 39 and 40 in the anticodon stem and loop of transfer RNAs. In Helicobacter pylori (strain P12), this protein is tRNA pseudouridine synthase A.